The sequence spans 172 residues: Inorganic pyrophosphatase (172 aa).

Substrate-binding residues include Lys28, Arg42, and Tyr54. Residues Asp64, Asp69, and Asp101 each contribute to the Mg(2+) site. A substrate-binding site is contributed by Tyr140.

It belongs to the PPase family. In terms of assembly, homohexamer. Mg(2+) is required as a cofactor.

The protein localises to the cytoplasm. The enzyme catalyses diphosphate + H2O = 2 phosphate + H(+). In terms of biological role, catalyzes the hydrolysis of inorganic pyrophosphate (PPi) forming two phosphate ions. The protein is Inorganic pyrophosphatase of Campylobacter jejuni subsp. jejuni serotype O:2 (strain ATCC 700819 / NCTC 11168).